The primary structure comprises 170 residues: MQLTTLLTGLISVLSVTTAIPMGSESPTPTSSVSKSLIAHSSSASVSASPTPSPNPYEAYTCPKDKFKACCMSVQQTGKDIVKQLGDLVPVLSGLQVSSAISFQCKNMTEREAPDSCNGQGYTPMCCNTKVEDTGFNTCKPFEDVKKAYYMNNMKDIPESQADMIMDILT.

Residues Met1 to Ala19 form the signal peptide. Disulfide bonds link Cys62–Cys126, Cys70–Cys117, Cys71–Cys105, and Cys127–Cys139.

The protein belongs to the fungal hydrophobin family.

It is found in the secreted. The protein localises to the cell wall. Its function is as follows. Aerial growth, conidiation, and dispersal of filamentous fungi in the environment rely upon a capability of their secreting small amphipathic proteins called hydrophobins (HPBs) with low sequence identity. Class I can self-assemble into an outermost layer of rodlet bundles on aerial cell surfaces, conferring cellular hydrophobicity that supports fungal growth, development and dispersal; whereas Class II form highly ordered films at water-air interfaces through intermolecular interactions but contribute nothing to the rodlet structure. In P.expansum, hydrophobins contribute to germination, tolerance to cold stress and mycotoxins patulin and citrinin production. The sequence is that of Class I hydrophobin E from Penicillium expansum (Blue mold rot fungus).